The following is a 461-amino-acid chain: pre-mRNA splicing regulator USH1G (461 aa).

ANK repeat units lie at residues 31-60, 64-93, and 97-126; these read DGMTPTLWAAYHGNLESLRLIVSRGGDPDK, WGNTPLHLAASNGHLHCLSFLVSFGANIWC, and DYHTPLDMAAMKGHMECVRYLDSIAAKQSS. The tract at residues 329 to 368 is disordered; it reads LGREDGGLDGAGTPRGRLHSSPSLDDDSLGSANSLQDRSC. The SAM domain occupies 385-447; it reads LEPETSPLET…KILGAVRRRR (63 aa). At serine 422 the chain carries Phosphoserine.

Part of a complex composed of USH1C, USH1G and MYO7A. Interacts with USH1C (via the first PDZ domain). Interacts with PDZD7. Interacts with CDH23 and PCDH15; these interactions may recruit USH1G to the plasma membrane. Interacts with intraflagellar transport proteins IFT20, IFT52 and IFT57. Interacts with splicing factors SF3B1, PRPF6, PRPF31 and SON. Interacts with the U4/U6.U5 tri-small nuclear ribonucleoprotein (tri-snRNP) complex in the presence of pre-mRNAs. Interacts (via SAM domain) with MAGI2 (via PDZ 6 domain); the interaction is triggered by phosphorylation of USH1G by CK2 and negatively regulates MAGI2-mediated endocytosis. Detected in stereocilia from cochlear hair cells (at protein level). Detected in retinal photoreceptor cell cilia (at protein level). Highly expressed in the cochlea, testis, cerebellum and eye, and low levels in brain, thymus and spleen. Significant signals detected in the neurosensory epithelium of inner ear cochlea and saccule, especially in inner and outer hair cells.

It is found in the cytoplasm. It localises to the cytosol. Its subcellular location is the cytoskeleton. The protein localises to the cell membrane. The protein resides in the cell projection. It is found in the cilium. It localises to the nucleus speckle. Its subcellular location is the nucleus. The protein localises to the cajal body. The protein resides in the microtubule organizing center. It is found in the centrosome. It localises to the photoreceptor inner segment. In terms of biological role, plays a role in pre-mRNA splicing by regulating the release and transfer of U4/U6.U5 tri-small nuclear ribonucleoprotein (tri-snRNP) complexes from their assembly site in Cajal bodies to nuclear speckles, thereby contributing to the assembly of the pre-catalytic spliceosome on target pre-mRNAs. May also participate in recycling of snRNPs back to Cajal bodies during splicing. Plays a role in regulating MAGI2-mediated endocytosis. Anchoring/scaffolding protein that is a part of the functional network formed by USH1C, USH1G, CDH23 and MYO7A that mediates mechanotransduction in cochlear hair cells. Required for normal development and maintenance of cochlear hair cell bundles. Required for normal hearing. This Mus musculus (Mouse) protein is pre-mRNA splicing regulator USH1G (Ush1g).